The chain runs to 268 residues: MAVGKNKGLSKGGKKGGKKKVVDPFSRKDWYDVKAPNMFQTRQIGKTLVNRTQGQRIASDYLKGRVFEVSLADLQKDIDPERSFRKFRLIAEDVQDRNVLCNFHGMDLTTDKYRSMVKKWQTLIEAIVEAKTVDGYLLRVFCIGFTAKDQQSQRKTCYAQQSQVRKIRARMTDIITNEVSGADLKQLVNKLALDSIAKDIEKSCQRIYPLHDVYIRKVKVLKKPRFDVSKLLELHGDGGGKSVEAVVSSEGAVIDRPEGYEPPVQEAV.

The tract at residues 1–21 is disordered; it reads MAVGKNKGLSKGGKKGGKKKV.

It belongs to the eukaryotic ribosomal protein eS1 family. As to quaternary structure, component of the small ribosomal subunit. Mature ribosomes consist of a small (40S) and a large (60S) subunit. The 40S subunit contains about 33 different proteins and 1 molecule of RNA (18S). The 60S subunit contains about 49 different proteins and 3 molecules of RNA (28S, 5.8S and 5S).

Its subcellular location is the cytoplasm. Its function is as follows. Essential for oogenesis; required for late follicle cell development. The chain is Small ribosomal subunit protein eS1 from Drosophila erecta (Fruit fly).